A 321-amino-acid chain; its full sequence is Hex-5-enoyl-[acyl-carrier protein] acetylenase (321 aa).

2 consecutive transmembrane segments (helical) span residues 36 to 56 (FLLYNVIPTIGTITAIALLWW) and 62 to 82 (VEIGLLIGMWALSMIGMSVGL). Residues 83 to 88 (HRYFAH) carry the Histidine box-1 motif. A helical membrane pass occupies residues 99-119 (VILAILGCMGAQGPVVSWVAV). Positions 120 to 124 (HRRHH) match the Histidine box-2 motif. The chain crosses the membrane as a helical span at residues 188-208 (YVVWIVLGLLIPTILGGIIHG). A Histidine box-3 motif is present at residues 269-273 (QNNHH).

This sequence belongs to the fatty acid desaturase type 2 family. Requires Fe(2+) as cofactor.

It localises to the membrane. It catalyses the reaction 5-hexenoyl-[ACP] + 2 reduced [2Fe-2S]-[ferredoxin] + O2 + 2 H(+) = 5-hexynoyl-[ACP] + 2 oxidized [2Fe-2S]-[ferredoxin] + 2 H2O. The catalysed reaction is hexanoyl-[ACP] + 2 reduced [2Fe-2S]-[ferredoxin] + O2 + 2 H(+) = 5-hexenoyl-[ACP] + 2 oxidized [2Fe-2S]-[ferredoxin] + 2 H2O. Desaturase involved in the biosynthesis of jamaicamides, which show sodium channel blocking activity and fish toxicity. Catalyzes the conversion of 5-hexenoyl loaded onto the acyl carrier protein JamC (5-hexenoyl-JamC) to 5-hexynoyl-JamC. Can also catalyze the conversion of hexanoyl-JamC to 5-hexenoyl-JamC, but it cannot use free 5-hexenoic acid, 5-hexenoyl-CoA, 2-hexenoyl-JamC, 3-hexenoyl-JamC or 4-hexenoyl-JamC. Is specific for C(6) chains, and cannot use 4-pentenoyl-JamC, 6-heptenoyl-JamC or 7-octenoyl-JamC as substrate. The protein is Hex-5-enoyl-[acyl-carrier protein] acetylenase of Moorena producens (strain JHB).